A 277-amino-acid polypeptide reads, in one-letter code: Secoisolariciresinol dehydrogenase (277 aa).

NAD(+) is bound by residues 24–29 (GGASGI), Asp-48, Val-73, and Asn-99. A substrate-binding site is contributed by Ser-163. Residue Tyr-166 is the Proton donor/acceptor of the active site. Lys-170 provides a ligand contact to NAD(+).

It belongs to the short-chain dehydrogenases/reductases (SDR) family. As to quaternary structure, homotetramer.

It catalyses the reaction (-)-secoisolariciresinol + 2 NAD(+) = (-)-matairesinol + 2 NADH + 2 H(+). Functionally, oxidoreductase involved in lignan biosynthesis. Catalyzes the stereospecific conversion of (-)-secoisolariciresinol to (-)-matairesinol via a lactol intermediate. The sequence is that of Secoisolariciresinol dehydrogenase from Forsythia intermedia (Border forsythia).